Here is a 157-residue protein sequence, read N- to C-terminus: Probable Brix domain-containing ribosomal biogenesis protein (157 aa).

In terms of domain architecture, Brix spans 1-157 (MLVTTSRKPS…KFNIKGFKKY (157 aa)).

Functionally, probably involved in the biogenesis of the ribosome. The chain is Probable Brix domain-containing ribosomal biogenesis protein from Methanosarcina mazei (strain ATCC BAA-159 / DSM 3647 / Goe1 / Go1 / JCM 11833 / OCM 88) (Methanosarcina frisia).